Reading from the N-terminus, the 941-residue chain is Zinc finger protein 507 (941 aa).

Position 95 is a phosphoserine (Ser-95). 2 consecutive C2H2-type zinc fingers follow at residues 122-144 and 152-175; these read YQCSLCKFLSPSFSVLKEHVKQH and LMCSECHATSRSQQELEAHVVSEH. Residues 165–177 are compositionally biased toward basic and acidic residues; that stretch reads QELEAHVVSEHEN. A disordered region spans residues 165 to 198; sequence QELEAHVVSEHENSASSQARSSPSGQGATERKSE. Residues 178–192 are compositionally biased toward low complexity; that stretch reads SASSQARSSPSGQGA. Residues 237 to 259 form a C2H2-type 3 zinc finger; the sequence is YRCLFCSYTCGQQRMLKTHAWKH. The residue at position 415 (Ser-415) is a Phosphoserine. Positions 455–477 are disordered; the sequence is ELSKGLAPDENAPPGRRRTNSES. C2H2-type zinc fingers lie at residues 630–652, 658–680, 686–709, 746–768, and 774–796; these read YRCRLCNYSSGNRGYIKQHLRVH, YQCPICEHIAENSKDLESHMINH, HQCKQCKESFHYKSQLRNHEREQH, YRCDVCDYTSTTYVGVRNHRRVH, and YRCSLCGYVCSHPPSLKSHMWKH. The segment at 823 to 856 is disordered; that stretch reads GKSRGKPLLTSSEERTGPTTGSPENLVSSSELTS. Residues 839–856 are compositionally biased toward polar residues; sequence GPTTGSPENLVSSSELTS. The segment at 899–921 adopts a C2H2-type 9 zinc-finger fold; it reads FCCCICGFESTSKESLLDHMKEH.

It belongs to the krueppel C2H2-type zinc-finger protein family.

The protein resides in the nucleus. In terms of biological role, may be involved in transcriptional regulation. The protein is Zinc finger protein 507 (Znf507) of Mus musculus (Mouse).